The chain runs to 136 residues: 5-hydroxyisourate hydrolase (136 aa).

Positions 1 to 20 are cleaved as a signal peptide; the sequence is MKRYILATAIASLVAAPAMA. Substrate is bound by residues histidine 31, arginine 69, and tyrosine 133.

This sequence belongs to the transthyretin family. 5-hydroxyisourate hydrolase subfamily. In terms of assembly, homotetramer.

The protein resides in the periplasm. The catalysed reaction is 5-hydroxyisourate + H2O = 5-hydroxy-2-oxo-4-ureido-2,5-dihydro-1H-imidazole-5-carboxylate + H(+). Functionally, catalyzes the hydrolysis of 5-hydroxyisourate (HIU) to 2-oxo-4-hydroxy-4-carboxy-5-ureidoimidazoline (OHCU). This Salmonella typhi protein is 5-hydroxyisourate hydrolase (hiuH).